We begin with the raw amino-acid sequence, 363 residues long: Probable cinnamyl alcohol dehydrogenase 6 (363 aa).

C51 is a binding site for Zn(2+). S53 provides a ligand contact to NADP(+). H73, E74, C104, C107, C110, C118, and C167 together coordinate Zn(2+). NADP(+) is bound by residues S171, 192–197, 215–220, T255, G279, and 302–304; these read GLGGLG, SSTTGK, and SGI.

This sequence belongs to the zinc-containing alcohol dehydrogenase family. As to quaternary structure, homodimer. It depends on Zn(2+) as a cofactor. In terms of tissue distribution, expressed in the primary and lateral roots, and root caps. Expressed in the hypocotyl, cotyledon veins and hydathodes. In stems, expressed in the vascular cambium, interfascicular cambium and developing xylem. Expressed in the style, anthers, stamen filaments, vascular tissues of sepals, stigmatic regions in flowers, and abscission and style regions of siliques.

It catalyses the reaction (E)-cinnamyl alcohol + NADP(+) = (E)-cinnamaldehyde + NADPH + H(+). It carries out the reaction (E)-coniferol + NADP(+) = (E)-coniferaldehyde + NADPH + H(+). The catalysed reaction is (E)-sinapyl alcohol + NADP(+) = (E)-sinapaldehyde + NADPH + H(+). The enzyme catalyses (E)-4-coumaroyl alcohol + NADP(+) = (E)-4-coumaraldehyde + NADPH + H(+). It catalyses the reaction (E)-caffeyl alcohol + NADP(+) = (E)-caffeyl aldehyde + NADPH + H(+). The protein operates within aromatic compound metabolism; phenylpropanoid biosynthesis. Its function is as follows. Involved in lignin biosynthesis. Catalyzes the final step specific for the production of lignin monomers. Catalyzes the NADPH-dependent reduction of coniferaldehyde, 5-hydroxyconiferaldehyde, sinapaldehyde, 4-coumaraldehyde and caffeyl aldehyde to their respective alcohols. This is Probable cinnamyl alcohol dehydrogenase 6 (CAD6) from Arabidopsis thaliana (Mouse-ear cress).